The following is a 110-amino-acid chain: Integration host factor subunit alpha (110 aa).

It belongs to the bacterial histone-like protein family. Heterodimer of an alpha and a beta chain.

Functionally, this protein is one of the two subunits of integration host factor, a specific DNA-binding protein that functions in genetic recombination as well as in transcriptional and translational control. The protein is Integration host factor subunit alpha of Bdellovibrio bacteriovorus (strain ATCC 15356 / DSM 50701 / NCIMB 9529 / HD100).